A 248-amino-acid polypeptide reads, in one-letter code: Methyl-coenzyme M reductase subunit gamma (248 aa).

R121 contacts coenzyme M.

It belongs to the methyl-coenzyme M reductase gamma subunit family. As to quaternary structure, MCR is a hexamer of two alpha, two beta, and two gamma chains, forming a dimer of heterotrimers. It depends on coenzyme F430 as a cofactor.

The protein localises to the cytoplasm. It carries out the reaction coenzyme B + methyl-coenzyme M = methane + coenzyme M-coenzyme B heterodisulfide. Its pathway is one-carbon metabolism; methyl-coenzyme M reduction; methane from methyl-coenzyme M: step 1/1. In terms of biological role, component of the methyl-coenzyme M reductase (MCR) I that catalyzes the reductive cleavage of methyl-coenzyme M (CoM-S-CH3 or 2-(methylthio)ethanesulfonate) using coenzyme B (CoB or 7-mercaptoheptanoylthreonine phosphate) as reductant which results in the production of methane and the mixed heterodisulfide of CoB and CoM (CoM-S-S-CoB). This is the final step in methanogenesis. In Methanosarcina barkeri (strain Fusaro / DSM 804), this protein is Methyl-coenzyme M reductase subunit gamma (mcrG).